A 95-amino-acid polypeptide reads, in one-letter code: Co-chaperonin GroES (95 aa).

This sequence belongs to the GroES chaperonin family. Heptamer of 7 subunits arranged in a ring. Interacts with the chaperonin GroEL.

Its subcellular location is the cytoplasm. Its function is as follows. Together with the chaperonin GroEL, plays an essential role in assisting protein folding. The GroEL-GroES system forms a nano-cage that allows encapsulation of the non-native substrate proteins and provides a physical environment optimized to promote and accelerate protein folding. GroES binds to the apical surface of the GroEL ring, thereby capping the opening of the GroEL channel. This is Co-chaperonin GroES from Deinococcus radiodurans (strain ATCC 13939 / DSM 20539 / JCM 16871 / CCUG 27074 / LMG 4051 / NBRC 15346 / NCIMB 9279 / VKM B-1422 / R1).